We begin with the raw amino-acid sequence, 155 residues long: MKITLIAVGTKMPSWVTTGFEEYQRRFPKDMPFELIEIPAGKRGKNADIKRILEQEGKAMLAACGKGKVVTLDIPGKPWTTPQLAEQLEAWKNDGRDVCLLIGGPEGLSPECKAAAEQSWSLSPLTLPHPLVRVVVAESLYRAWSLTTNHPYHRE.

S-adenosyl-L-methionine is bound by residues L72, G103, and L122–L127.

This sequence belongs to the RNA methyltransferase RlmH family. In terms of assembly, homodimer.

The protein resides in the cytoplasm. It carries out the reaction pseudouridine(1915) in 23S rRNA + S-adenosyl-L-methionine = N(3)-methylpseudouridine(1915) in 23S rRNA + S-adenosyl-L-homocysteine + H(+). Functionally, specifically methylates the pseudouridine at position 1915 (m3Psi1915) in 23S rRNA. The polypeptide is Ribosomal RNA large subunit methyltransferase H (Haemophilus influenzae (strain PittGG)).